Reading from the N-terminus, the 327-residue chain is DNA-directed RNA polymerase subunit alpha (327 aa).

The alpha N-terminal domain (alpha-NTD) stretch occupies residues 1–231; sequence MIYQMQMPAK…DHIMYFANFS (231 aa). The segment at 247–327 is alpha C-terminal domain (alpha-CTD); that stretch reads DEFESMRKLL…GMDITRYQMK (81 aa).

Belongs to the RNA polymerase alpha chain family. In terms of assembly, homodimer. The RNAP catalytic core consists of 2 alpha, 1 beta, 1 beta' and 1 omega subunit. When a sigma factor is associated with the core the holoenzyme is formed, which can initiate transcription.

It catalyses the reaction RNA(n) + a ribonucleoside 5'-triphosphate = RNA(n+1) + diphosphate. Functionally, DNA-dependent RNA polymerase catalyzes the transcription of DNA into RNA using the four ribonucleoside triphosphates as substrates. The protein is DNA-directed RNA polymerase subunit alpha of Chlorobium phaeobacteroides (strain DSM 266 / SMG 266 / 2430).